The chain runs to 63 residues: Small ribosomal subunit protein eS17 (63 aa).

It belongs to the eukaryotic ribosomal protein eS17 family.

In Methanococcus maripaludis (strain C7 / ATCC BAA-1331), this protein is Small ribosomal subunit protein eS17.